Consider the following 458-residue polypeptide: Sulfite exporter TauE/SafE family protein 2 (458 aa).

12 consecutive transmembrane segments (helical) span residues 5–25 (FVPI…EQEP), 53–73 (IELT…SSIS), 74–94 (SAGG…VAGL), 101–121 (SFSA…NLFV), 128–148 (GKTL…LLGV), 150–170 (IGVI…FAVF), 227–247 (FPWI…AVYL), 267–287 (YWLI…WICF), 324–344 (VMAL…GMLI), 348–368 (LLQV…MVLF), 386–406 (GTAS…LKVV), and 418–438 (IIVF…TSYG).

This sequence belongs to the 4-toluene sulfonate uptake permease (TSUP) (TC 2.A.102) family.

The protein resides in the membrane. The sequence is that of Sulfite exporter TauE/SafE family protein 2 from Arabidopsis thaliana (Mouse-ear cress).